The sequence spans 116 residues: MRHRKAYRKLSKPTPQRKALFKALLISLFKHGKIVTTLPRAKEVTRIAEKLLTIAKEDSVHHRRLVYAWLQDRELVRKVFVEIAPKYKDRNGGYIRILKLGMRRGDAAEQAVIEFV.

The protein belongs to the bacterial ribosomal protein bL17 family. Part of the 50S ribosomal subunit. Contacts protein L32.

This Dictyoglomus turgidum (strain DSM 6724 / Z-1310) protein is Large ribosomal subunit protein bL17.